The chain runs to 424 residues: ATP synthase subunit beta, mitochondrial (424 aa).

The N-terminal 60 residues, 1 to 60 (MFRLSSGLLKGGACASRSRIPQLGRSLYSTATSAGADKTQGKIHTVIGAVVDVQFNHGRL), are a transit peptide targeting the mitochondrion. ATP-binding positions include 187 to 194 (GGAGVGKT), 188 to 195 (GAGVGKTV), 219 to 220 (ER), and tyrosine 374.

Belongs to the ATPase alpha/beta chains family. As to quaternary structure, F-type ATPases have 2 components, CF(1) - the catalytic core - and CF(0) - the membrane proton channel. CF(1) has five subunits: alpha(3), beta(3), gamma(1), delta(1), epsilon(1). CF(0) has three main subunits: a, b and c.

It is found in the mitochondrion. It localises to the mitochondrion inner membrane. It catalyses the reaction ATP + H2O + 4 H(+)(in) = ADP + phosphate + 5 H(+)(out). Functionally, ATP synthase subunit beta; part of the gene cluster that mediates the biosynthesis of citreoviridin, an inhibitor of the of F1-ATPase beta-subunit. Mitochondrial membrane ATP synthase (F(1)F(0) ATP synthase or Complex V) produces ATP from ADP in the presence of a proton gradient across the membrane which is generated by electron transport complexes of the respiratory chain. Whereas ctvA to ctvD constitute the core biosynthetic gene cluster, ctvE acts as a self-resistance gene. This is ATP synthase subunit beta, mitochondrial from Aspergillus terreus (strain NIH 2624 / FGSC A1156).